We begin with the raw amino-acid sequence, 179 residues long: Large ribosomal subunit protein uL6 (179 aa).

A compositionally biased stretch (basic and acidic residues) spans 154-169 (EPYKGKGVKYEHEQIR). The segment at 154–179 (EPYKGKGVKYEHEQIRRKAGKSGGKK) is disordered. A compositionally biased stretch (basic residues) spans 170 to 179 (RKAGKSGGKK).

Belongs to the universal ribosomal protein uL6 family. In terms of assembly, part of the 50S ribosomal subunit.

Functionally, this protein binds to the 23S rRNA, and is important in its secondary structure. It is located near the subunit interface in the base of the L7/L12 stalk, and near the tRNA binding site of the peptidyltransferase center. This chain is Large ribosomal subunit protein uL6, found in Oleidesulfovibrio alaskensis (strain ATCC BAA-1058 / DSM 17464 / G20) (Desulfovibrio alaskensis).